The chain runs to 338 residues: Ketol-acid reductoisomerase (NADP(+)) (338 aa).

The region spanning 1–181 is the KARI N-terminal Rossmann domain; that stretch reads MKVSYDKDCD…GGGRTGIIET (181 aa). NADP(+)-binding positions include 24-27, Arg-47, Ser-50, Ser-52, and 82-85; these read YGSQ and DEFQ. His-107 is a catalytic residue. Gly-133 contacts NADP(+). The region spanning 182 to 327 is the KARI C-terminal knotted domain; it reads TFKDETETDL…EKLRAMMPWI (146 aa). Residues Asp-190, Glu-194, Glu-226, and Glu-230 each contribute to the Mg(2+) site. Ser-251 is a binding site for substrate.

The protein belongs to the ketol-acid reductoisomerase family. Requires Mg(2+) as cofactor.

It catalyses the reaction (2R)-2,3-dihydroxy-3-methylbutanoate + NADP(+) = (2S)-2-acetolactate + NADPH + H(+). The catalysed reaction is (2R,3R)-2,3-dihydroxy-3-methylpentanoate + NADP(+) = (S)-2-ethyl-2-hydroxy-3-oxobutanoate + NADPH + H(+). It participates in amino-acid biosynthesis; L-isoleucine biosynthesis; L-isoleucine from 2-oxobutanoate: step 2/4. Its pathway is amino-acid biosynthesis; L-valine biosynthesis; L-valine from pyruvate: step 2/4. Functionally, involved in the biosynthesis of branched-chain amino acids (BCAA). Catalyzes an alkyl-migration followed by a ketol-acid reduction of (S)-2-acetolactate (S2AL) to yield (R)-2,3-dihydroxy-isovalerate. In the isomerase reaction, S2AL is rearranged via a Mg-dependent methyl migration to produce 3-hydroxy-3-methyl-2-ketobutyrate (HMKB). In the reductase reaction, this 2-ketoacid undergoes a metal-dependent reduction by NADPH to yield (R)-2,3-dihydroxy-isovalerate. The chain is Ketol-acid reductoisomerase (NADP(+)) from Stutzerimonas stutzeri (strain A1501) (Pseudomonas stutzeri).